The following is a 174-amino-acid chain: Ribosome maturation factor RimM (174 aa).

In terms of domain architecture, PRC barrel spans 91-164; it reads DDAWYPHQLQ…KVVLSPPGGL (74 aa).

Belongs to the RimM family. In terms of assembly, binds ribosomal protein uS19.

The protein localises to the cytoplasm. Its function is as follows. An accessory protein needed during the final step in the assembly of 30S ribosomal subunit, possibly for assembly of the head region. Essential for efficient processing of 16S rRNA. May be needed both before and after RbfA during the maturation of 16S rRNA. It has affinity for free ribosomal 30S subunits but not for 70S ribosomes. The chain is Ribosome maturation factor RimM from Kineococcus radiotolerans (strain ATCC BAA-149 / DSM 14245 / SRS30216).